We begin with the raw amino-acid sequence, 229 residues long: 1-(5-phosphoribosyl)-5-[(5-phosphoribosylamino)methylideneamino] imidazole-4-carboxamide isomerase (229 aa).

Aspartate 8 acts as the Proton acceptor in catalysis. Aspartate 125 serves as the catalytic Proton donor.

It belongs to the HisA/HisF family.

The protein resides in the cytoplasm. It carries out the reaction 1-(5-phospho-beta-D-ribosyl)-5-[(5-phospho-beta-D-ribosylamino)methylideneamino]imidazole-4-carboxamide = 5-[(5-phospho-1-deoxy-D-ribulos-1-ylimino)methylamino]-1-(5-phospho-beta-D-ribosyl)imidazole-4-carboxamide. It functions in the pathway amino-acid biosynthesis; L-histidine biosynthesis; L-histidine from 5-phospho-alpha-D-ribose 1-diphosphate: step 4/9. The polypeptide is 1-(5-phosphoribosyl)-5-[(5-phosphoribosylamino)methylideneamino] imidazole-4-carboxamide isomerase (Thermococcus onnurineus (strain NA1)).